The primary structure comprises 482 residues: Adenylyltransferase and sulfurtransferase MOCS3-2 (482 aa).

ATP contacts are provided by residues Gly-125, Asp-146, 153-157 (NNLHR), Lys-170, and 214-215 (DN). The Zn(2+) site is built by Cys-255 and Cys-258. Residue Cys-272 is the Glycyl thioester intermediate; for adenylyltransferase activity of the active site. Zn(2+) contacts are provided by Cys-330 and Cys-333. Positions 385–480 (DGEPHLLLDV…WGQDVDPDFP (96 aa)) constitute a Rhodanese domain. The active-site Cysteine persulfide intermediate; for sulfurtransferase activity is Cys-440.

In the N-terminal section; belongs to the HesA/MoeB/ThiF family. UBA4 subfamily. Zn(2+) serves as cofactor.

It localises to the cytoplasm. It catalyses the reaction [molybdopterin-synthase sulfur-carrier protein]-C-terminal Gly-Gly + ATP + H(+) = [molybdopterin-synthase sulfur-carrier protein]-C-terminal Gly-Gly-AMP + diphosphate. The enzyme catalyses [molybdopterin-synthase sulfur-carrier protein]-C-terminal Gly-Gly-AMP + S-sulfanyl-L-cysteinyl-[cysteine desulfurase] + AH2 = [molybdopterin-synthase sulfur-carrier protein]-C-terminal-Gly-aminoethanethioate + L-cysteinyl-[cysteine desulfurase] + A + AMP + 2 H(+). Its pathway is tRNA modification; 5-methoxycarbonylmethyl-2-thiouridine-tRNA biosynthesis. The protein operates within cofactor biosynthesis; molybdopterin biosynthesis. Functionally, plays a central role in 2-thiolation of mcm(5)S(2)U at tRNA wobble positions of cytosolic tRNA(Lys), tRNA(Glu) and tRNA(Gln). Also essential during biosynthesis of the molybdenum cofactor. Acts by mediating the C-terminal thiocarboxylation of sulfur carriers URM1 and MOCS2A. Its N-terminus first activates URM1 and MOCS2A as acyl-adenylates (-COAMP), then the persulfide sulfur on the catalytic cysteine is transferred to URM1 and MOCS2A to form thiocarboxylation (-COSH) of their C-terminus. The reaction probably involves hydrogen sulfide that is generated from the persulfide intermediate and that acts as a nucleophile towards URM1 and MOCS2A. Subsequently, a transient disulfide bond is formed. Does not use thiosulfate as sulfur donor; NFS1 probably acting as a sulfur donor for thiocarboxylation reactions. The protein is Adenylyltransferase and sulfurtransferase MOCS3-2 of Zea mays (Maize).